The sequence spans 830 residues: Penicillin-binding protein 1A (830 aa).

Over residues Met-1–Ser-17 the composition is skewed to basic residues. The tract at residues Met-1 to Asn-20 is disordered. Residues Met-1–Trp-30 are Cytoplasmic-facing. Residues Phe-31–Leu-51 traverse the membrane as a helical; Signal-anchor for type II membrane protein segment. Over Ser-52 to Gln-830 the chain is Extracellular. A transglycosylase region spans residues Ser-72–Ala-244. The Proton donor; for transglycosylase activity role is filled by Glu-111. Residues Ala-378–Gly-663 form a transpeptidase region. Ser-417 functions as the Acyl-ester intermediate; for transpeptidase activity in the catalytic mechanism. The interval Ala-731 to Gln-830 is disordered. Residues Asn-735–Asn-746 show a composition bias toward low complexity. Positions Lys-747–Pro-758 are enriched in basic and acidic residues. Composition is skewed to low complexity over residues Asn-759–Asn-807 and Gly-816–Gln-830.

This sequence in the N-terminal section; belongs to the glycosyltransferase 51 family. It in the C-terminal section; belongs to the transpeptidase family.

Its subcellular location is the cell membrane. The enzyme catalyses [GlcNAc-(1-&gt;4)-Mur2Ac(oyl-L-Ala-gamma-D-Glu-L-Lys-D-Ala-D-Ala)](n)-di-trans,octa-cis-undecaprenyl diphosphate + beta-D-GlcNAc-(1-&gt;4)-Mur2Ac(oyl-L-Ala-gamma-D-Glu-L-Lys-D-Ala-D-Ala)-di-trans,octa-cis-undecaprenyl diphosphate = [GlcNAc-(1-&gt;4)-Mur2Ac(oyl-L-Ala-gamma-D-Glu-L-Lys-D-Ala-D-Ala)](n+1)-di-trans,octa-cis-undecaprenyl diphosphate + di-trans,octa-cis-undecaprenyl diphosphate + H(+). The catalysed reaction is Preferential cleavage: (Ac)2-L-Lys-D-Ala-|-D-Ala. Also transpeptidation of peptidyl-alanyl moieties that are N-acyl substituents of D-alanine.. It functions in the pathway cell wall biogenesis; peptidoglycan biosynthesis. Its function is as follows. Cell wall formation. Synthesis of cross-linked peptidoglycan from the lipid intermediates. The enzyme has a penicillin-insensitive transglycosylase N-terminal domain (formation of linear glycan strands) and a penicillin-sensitive transpeptidase C-terminal domain (cross-linking of the peptide subunits). The chain is Penicillin-binding protein 1A (pbpA) from Clostridium perfringens (strain ATCC 13124 / DSM 756 / JCM 1290 / NCIMB 6125 / NCTC 8237 / Type A).